A 217-amino-acid chain; its full sequence is Large ribosomal subunit protein uL1 (217 aa).

It belongs to the universal ribosomal protein uL1 family. In terms of assembly, part of the 50S ribosomal subunit.

Binds directly to 23S rRNA. The L1 stalk is quite mobile in the ribosome, and is involved in E site tRNA release. Functionally, protein L1 is also a translational repressor protein, it controls the translation of the L11 operon by binding to its mRNA. The chain is Large ribosomal subunit protein uL1 from Wolbachia pipientis wMel.